A 365-amino-acid polypeptide reads, in one-letter code: Putative nudix hydrolase 1 (365 aa).

Positions 72-201 (VNYVAAAIIL…DFIRLVDEAV (130 aa)) constitute a Nudix hydrolase domain. A Nudix box motif is present at residues 109 to 130 (GRVEAGETIEEAVVREVKEETG). The Mg(2+) site is built by E124 and E128.

This sequence belongs to the Nudix hydrolase family. Requires Mg(2+) as cofactor. Mn(2+) serves as cofactor.

Its function is as follows. Probably mediates the hydrolysis of some nucleoside diphosphate derivatives. The polypeptide is Putative nudix hydrolase 1 (ndx-1) (Caenorhabditis elegans).